A 313-amino-acid chain; its full sequence is Dimethyladenosine transferase (313 aa).

The segment at 1–21 is disordered; it reads MPKVKSGAIGRRRGRQEQRRE. 6 residues coordinate S-adenosyl-L-methionine: histidine 37, leucine 39, glycine 64, glutamate 85, aspartate 113, and asparagine 128.

This sequence belongs to the class I-like SAM-binding methyltransferase superfamily. rRNA adenine N(6)-methyltransferase family. As to quaternary structure, part of the small subunit (SSU) processome, composed of more than 70 proteins and the RNA chaperone small nucleolar RNA (snoRNA) U3.

The protein localises to the nucleus. Its subcellular location is the nucleoplasm. It localises to the nucleolus. It carries out the reaction adenosine(1779)/adenosine(1780) in 18S rRNA + 4 S-adenosyl-L-methionine = N(6)-dimethyladenosine(1779)/N(6)-dimethyladenosine(1780) in 18S rRNA + 4 S-adenosyl-L-homocysteine + 4 H(+). Specifically dimethylates two adjacent adenosines in the loop of a conserved hairpin near the 3'-end of 18S rRNA in the 40S particle. Involved in the pre-rRNA processing steps leading to small-subunit rRNA production independently of its RNA-modifying catalytic activity. Part of the small subunit (SSU) processome, first precursor of the small eukaryotic ribosomal subunit. During the assembly of the SSU processome in the nucleolus, many ribosome biogenesis factors, an RNA chaperone and ribosomal proteins associate with the nascent pre-rRNA and work in concert to generate RNA folding, modifications, rearrangements and cleavage as well as targeted degradation of pre-ribosomal RNA by the RNA exosome. In Homo sapiens (Human), this protein is Dimethyladenosine transferase.